The primary structure comprises 757 residues: MTIFNHTLGFPRIGLNRELKKAQEDYWSGNLLYEDFLCVGSQLRRENWKKQKDAGIDYIPVGDFAWYDHVLSTSMMLGNIPERHLNVNDNKIDLDCLFRIARGCSPDVAASEMTKWFNTNYHYIVPEFNKNRILKFSWKQILEETDEALLLGYKVKPIILGPITYLWLGKIKGEYFDRLDLLKNILPIYKQVLRELSQRNIDFVQIDEPALVLDLPEKWKKAYSYAYEYLNGTTKILLTTYFDSIEHNIEYIRDLPIYGIHIDLVFGKYNLFDFNSKLPKEWILSLGVINGRNVWRADLIKLFKSISTILKFRKKLLIGSSCSLLHSPIDLQKEKNLDKESKKWFSFAVQKCTELSLLSKALNKNDTDSIQKWCSSIYERNFSKRVQKIEVQNRLSEILNVNFKRSDSYNIRSREQKKKFNLPILPTTTIGSFPQTLQIRKLRRDYKQGLINDVDYEIGIKKHIKEVIKEQEKLGIDVLVHGEPERNDMVEYFGENLDGFIFTDNGWVQSYGSRCVKPPIIIGDVSRLKPITVKWSKYAQSLTDKPVKAMLTGPVTILFWSFPREDISLEKIAKQIGLALRDEVLDLEKEKIEIIQIDEPALREGLPLRKSLWNEYLSWAVDAFRLSSSGVKNTTQIHTHMCYCEFHDIMHAISFLDADVITIETARSDMELLKSFKTFKYPNEIGPGVYDIHSSNIPSITSIKFLLNKAIAYIPVERIWVNPDCGLKTRNWNETILALKNMVCAAKEMRDKIKKIT.

5-methyltetrahydropteroyltri-L-glutamate contacts are provided by residues 17 to 20 (RELK) and Lys-115. L-homocysteine-binding positions include 430–432 (IGS) and Glu-483. L-methionine-binding positions include 430–432 (IGS) and Glu-483. 5-methyltetrahydropteroyltri-L-glutamate is bound by residues 514-515 (RC) and Trp-560. Asp-598 is a binding site for L-homocysteine. Residue Asp-598 coordinates L-methionine. Glu-604 provides a ligand contact to 5-methyltetrahydropteroyltri-L-glutamate. Residues His-640, Cys-642, and Glu-664 each contribute to the Zn(2+) site. His-693 functions as the Proton donor in the catalytic mechanism. Cys-725 serves as a coordination point for Zn(2+).

It belongs to the vitamin-B12 independent methionine synthase family. The cofactor is Zn(2+).

It catalyses the reaction 5-methyltetrahydropteroyltri-L-glutamate + L-homocysteine = tetrahydropteroyltri-L-glutamate + L-methionine. Its pathway is amino-acid biosynthesis; L-methionine biosynthesis via de novo pathway; L-methionine from L-homocysteine (MetE route): step 1/1. Catalyzes the transfer of a methyl group from 5-methyltetrahydrofolate to homocysteine resulting in methionine formation. The chain is 5-methyltetrahydropteroyltriglutamate--homocysteine methyltransferase from Buchnera aphidicola subsp. Schizaphis graminum (strain Sg).